We begin with the raw amino-acid sequence, 122 residues long: Small ribosomal subunit protein uS12c (122 aa).

This sequence belongs to the universal ribosomal protein uS12 family. As to quaternary structure, part of the 30S ribosomal subunit.

The protein localises to the plastid. The protein resides in the chloroplast. In terms of biological role, with S4 and S5 plays an important role in translational accuracy. Located at the interface of the 30S and 50S subunits. The protein is Small ribosomal subunit protein uS12c (rps12) of Chloranthus spicatus (Chulantree).